Reading from the N-terminus, the 345-residue chain is UDP-N-acetylenolpyruvoylglucosamine reductase (345 aa).

The FAD-binding PCMH-type domain maps to 16–185 (VNAFAKSVVT…VSVGLRLCKK (170 aa)). Residue R162 is part of the active site. S231 (proton donor) is an active-site residue. E328 is a catalytic residue.

The protein belongs to the MurB family. FAD serves as cofactor.

It localises to the cytoplasm. It catalyses the reaction UDP-N-acetyl-alpha-D-muramate + NADP(+) = UDP-N-acetyl-3-O-(1-carboxyvinyl)-alpha-D-glucosamine + NADPH + H(+). It participates in cell wall biogenesis; peptidoglycan biosynthesis. Cell wall formation. This chain is UDP-N-acetylenolpyruvoylglucosamine reductase, found in Blochmanniella pennsylvanica (strain BPEN).